We begin with the raw amino-acid sequence, 318 residues long: Methionyl-tRNA formyltransferase (318 aa).

111–114 (SLLP) contacts (6S)-5,6,7,8-tetrahydrofolate.

It belongs to the Fmt family.

It catalyses the reaction L-methionyl-tRNA(fMet) + (6R)-10-formyltetrahydrofolate = N-formyl-L-methionyl-tRNA(fMet) + (6S)-5,6,7,8-tetrahydrofolate + H(+). Functionally, attaches a formyl group to the free amino group of methionyl-tRNA(fMet). The formyl group appears to play a dual role in the initiator identity of N-formylmethionyl-tRNA by promoting its recognition by IF2 and preventing the misappropriation of this tRNA by the elongation apparatus. This chain is Methionyl-tRNA formyltransferase, found in Chlorobium limicola (strain DSM 245 / NBRC 103803 / 6330).